An 84-amino-acid chain; its full sequence is uncharacterized protein (84 aa).

In terms of domain architecture, 2Fe-2S ferredoxin-type spans 2-84 (ARVTLRITGT…RAKGDIEIEM (83 aa)). Residues C37, C42, C45, and C74 each coordinate [2Fe-2S] cluster.

Requires [2Fe-2S] cluster as cofactor.

This is an uncharacterized protein from Escherichia coli O6:H1 (strain CFT073 / ATCC 700928 / UPEC).